We begin with the raw amino-acid sequence, 513 residues long: Light-independent protochlorophyllide reductase subunit B (513 aa).

Asp36 serves as a coordination point for [4Fe-4S] cluster. Catalysis depends on Asp299, which acts as the Proton donor. Substrate is bound at residue 434–435 (GM).

It belongs to the ChlB/BchB/BchZ family. Protochlorophyllide reductase is composed of three subunits; ChlL, ChlN and ChlB. Forms a heterotetramer of two ChlB and two ChlN subunits. Requires [4Fe-4S] cluster as cofactor.

It localises to the plastid. The protein localises to the chloroplast. The catalysed reaction is chlorophyllide a + oxidized 2[4Fe-4S]-[ferredoxin] + 2 ADP + 2 phosphate = protochlorophyllide a + reduced 2[4Fe-4S]-[ferredoxin] + 2 ATP + 2 H2O. It participates in porphyrin-containing compound metabolism; chlorophyll biosynthesis (light-independent). In terms of biological role, component of the dark-operative protochlorophyllide reductase (DPOR) that uses Mg-ATP and reduced ferredoxin to reduce ring D of protochlorophyllide (Pchlide) to form chlorophyllide a (Chlide). This reaction is light-independent. The NB-protein (ChlN-ChlB) is the catalytic component of the complex. The polypeptide is Light-independent protochlorophyllide reductase subunit B (Staurastrum punctulatum (Green alga)).